Here is a 291-residue protein sequence, read N- to C-terminus: Mitochondrial fission factor (291 aa).

Topologically, residues 1–271 (MAEISRIQYE…ENKERAKREM (271 aa)) are cytoplasmic. Position 89 is a phosphothreonine (T89). Residues 106 to 134 (LERPLPTPQSEESRAVGRLKRERSMSENA) are disordered. A phosphoserine mark is found at S129, S131, and S146. Residue T149 is modified to Phosphothreonine. Residues S151, S178, S182, and S244 each carry the phosphoserine modification. Residues 240 to 271 (VDAASLRRQIIKLNRRLQLLEEENKERAKREM) adopt a coiled-coil conformation. The helical; Anchor for type IV membrane protein transmembrane segment at 272–289 (VMYSITVAFWLLNSWLWF) threads the bilayer. Over 290 to 291 (RR) the chain is Mitochondrial intermembrane.

This sequence belongs to the Tango11 family. Homodimer. Interacts with DNM1L. Interacts with C11orf65/MFI; the interaction inhibits MFF interaction with DNM1L.

It localises to the mitochondrion outer membrane. The protein localises to the peroxisome. It is found in the cytoplasmic vesicle. The protein resides in the secretory vesicle. Its subcellular location is the synaptic vesicle. Its function is as follows. Plays a role in mitochondrial and peroxisomal fission. Promotes the recruitment and association of the fission mediator dynamin-related protein 1 (DNM1L) to the mitochondrial surface. May be involved in regulation of synaptic vesicle membrane dynamics by recruitment of DNM1L to clathrin-containing vesicles. This is Mitochondrial fission factor (Mff) from Mus musculus (Mouse).